The chain runs to 570 residues: Peptidyl-prolyl cis-trans isomerase CYP63 (570 aa).

In terms of domain architecture, PPIase cyclophilin-type spans 10–174 (FLDVSIGGDP…SPVKIIDCGE (165 aa)). A disordered region spans residues 180-570 (AHDAAEREKG…GKRGLVSYAD (391 aa)). Over residues 203 to 219 (VSDREAKETRKKESNEK) the composition is skewed to basic and acidic residues. Low complexity-rich tracts occupy residues 229–238 (SSDSYSSSSD) and 246–259 (EAYS…SSSS). Basic residues predominate over residues 262-292 (KHRKRKSTTRHKGRRGERKSKGRSGKKKARP). The segment covering 297 to 309 (STNSSSDTESSSS) has biased composition (low complexity). A compositionally biased stretch (basic and acidic residues) spans 323–339 (VKVDNADQHANLDDSVK). Ser340 is modified (phosphoserine). A compositionally biased stretch (basic residues) spans 340 to 351 (SRSRSPIRRRNQ). The segment covering 352 to 365 (NSRSKSPSRSPVRV) has biased composition (low complexity). Composition is skewed to basic and acidic residues over residues 387–397 (SPREKPTEETV) and 437–467 (SPPR…ERSP). Residues 468-490 (RGRFRSPPRRRSPPRYNRRRRST) are compositionally biased toward basic residues. Residues 495 to 505 (DGYRRRLRDGS) are compositionally biased toward basic and acidic residues. The segment covering 509 to 523 (SPRHRSRSQSPRKRQ) has biased composition (basic residues). A compositionally biased stretch (low complexity) spans 546 to 555 (SPAESLSPSH).

It belongs to the cyclophilin-type PPIase family. As to quaternary structure, interacts with SNRNP35, RNU1, SCL28, SCL30, SR30 and SR34. The binding to SR34 is phosphorylation-dependent. As to expression, ubiquitous.

Its subcellular location is the nucleus. It localises to the nucleoplasm. The protein localises to the nucleus speckle. The catalysed reaction is [protein]-peptidylproline (omega=180) = [protein]-peptidylproline (omega=0). In terms of biological role, PPIases accelerate the folding of proteins. It catalyzes the cis-trans isomerization of proline imidic peptide bonds in oligopeptides. May be implicated in the folding, transport, and assembly of proteins. Probably involved in early steps of spliceosomal assembly. This chain is Peptidyl-prolyl cis-trans isomerase CYP63 (CYP63), found in Arabidopsis thaliana (Mouse-ear cress).